The sequence spans 400 residues: NADH-quinone oxidoreductase subunit D (400 aa).

It belongs to the complex I 49 kDa subunit family. NDH-1 is composed of 14 different subunits. Subunits NuoB, C, D, E, F, and G constitute the peripheral sector of the complex.

The protein resides in the cell inner membrane. It catalyses the reaction a quinone + NADH + 5 H(+)(in) = a quinol + NAD(+) + 4 H(+)(out). In terms of biological role, NDH-1 shuttles electrons from NADH, via FMN and iron-sulfur (Fe-S) centers, to quinones in the respiratory chain. The immediate electron acceptor for the enzyme in this species is believed to be a menaquinone. Couples the redox reaction to proton translocation (for every two electrons transferred, four hydrogen ions are translocated across the cytoplasmic membrane), and thus conserves the redox energy in a proton gradient. The protein is NADH-quinone oxidoreductase subunit D of Pelodictyon phaeoclathratiforme (strain DSM 5477 / BU-1).